The sequence spans 298 residues: 4-hydroxy-tetrahydrodipicolinate synthase (298 aa).

Threonine 48 is a pyruvate binding site. Catalysis depends on tyrosine 137, which acts as the Proton donor/acceptor. Lysine 166 functions as the Schiff-base intermediate with substrate in the catalytic mechanism. Isoleucine 207 contributes to the pyruvate binding site.

This sequence belongs to the DapA family. In terms of assembly, homotetramer; dimer of dimers.

Its subcellular location is the cytoplasm. It carries out the reaction L-aspartate 4-semialdehyde + pyruvate = (2S,4S)-4-hydroxy-2,3,4,5-tetrahydrodipicolinate + H2O + H(+). Its pathway is amino-acid biosynthesis; L-lysine biosynthesis via DAP pathway; (S)-tetrahydrodipicolinate from L-aspartate: step 3/4. In terms of biological role, catalyzes the condensation of (S)-aspartate-beta-semialdehyde [(S)-ASA] and pyruvate to 4-hydroxy-tetrahydrodipicolinate (HTPA). This Campylobacter jejuni subsp. jejuni serotype O:6 (strain 81116 / NCTC 11828) protein is 4-hydroxy-tetrahydrodipicolinate synthase.